Reading from the N-terminus, the 86-residue chain is Alpha-toxin TbTx5 (86 aa).

The signal sequence occupies residues 1-19 (MNDFVFLVVACLLTAGTEG). The region spanning 21–82 (KDGYPVEGDN…EPTKTNGRCK (62 aa)) is the LCN-type CS-alpha/beta domain. Intrachain disulfides connect Cys-31-Cys-81, Cys-35-Cys-57, Cys-43-Cys-64, and Cys-47-Cys-66. Pro-83 bears the Proline amide mark.

This sequence belongs to the long (4 C-C) scorpion toxin superfamily. Sodium channel inhibitor family. Alpha subfamily. As to expression, expressed by the venom gland.

It localises to the secreted. Alpha toxins bind voltage-independently at site-3 of sodium channels (Nav) and inhibit the inactivation of the activated channels, thereby blocking neuronal transmission. The protein is Alpha-toxin TbTx5 of Tityus bahiensis (Brazilian scorpion).